A 463-amino-acid polypeptide reads, in one-letter code: 3-isopropylmalate dehydratase large subunit (463 aa).

Residues cysteine 347, cysteine 407, and cysteine 410 each coordinate [4Fe-4S] cluster.

This sequence belongs to the aconitase/IPM isomerase family. LeuC type 1 subfamily. As to quaternary structure, heterodimer of LeuC and LeuD. Requires [4Fe-4S] cluster as cofactor.

The catalysed reaction is (2R,3S)-3-isopropylmalate = (2S)-2-isopropylmalate. It functions in the pathway amino-acid biosynthesis; L-leucine biosynthesis; L-leucine from 3-methyl-2-oxobutanoate: step 2/4. Catalyzes the isomerization between 2-isopropylmalate and 3-isopropylmalate, via the formation of 2-isopropylmaleate. The chain is 3-isopropylmalate dehydratase large subunit from Buchnera aphidicola subsp. Cinara cedri (strain Cc).